We begin with the raw amino-acid sequence, 411 residues long: MAANATMATSGSARKRLLKEEDMTKVEFETSEEVDVTPTFDTMGLREDLLRGIYAYGFEKPSAIQQRAIKQIIKGRDVIAQSQSGTGKTATFSVSVLQCLDIQVRETQALILAPTRELAVQIQKGLLALGDYMNVQCHACIGGTNVGEDIRKLDYGQHVVAGTPGRVFDMIRRRSLRTRAIKMLVLDEADEMLNKGFKEQIYDVYRYLPPATQVVLISATLPHEILEMTNKFMTDPIRILVKRDELTLEGIKQFFVAVEREEWKFDTLCDLYDTLTITQAVIFCNTKRKVDWLTEKMREANFTVSSMHGDMPQKERESIMKEFRSGASRVLISTDVWARGLDVPQVSLIINYDLPNNRELYIHRIGRSGRYGRKGVAINFVKNDDIRILRDIEQYYSTQIDEMPMNVADLI.

Residue Met-1 is modified to N-acetylmethionine. An N-acetylalanine; in Eukaryotic initiation factor 4A-III, N-terminally processed modification is found at Ala-2. A phosphoserine mark is found at Ser-10 and Ser-12. Residue Lys-19 forms a Glycyl lysine isopeptide (Lys-Gly) (interchain with G-Cter in SUMO2) linkage. A Q motif motif is present at residues 38-66 (PTFDTMGLREDLLRGIYAYGFEKPSAIQQ). ATP contacts are provided by residues Lys-60, Gln-65, and 85–90 (GTGKTA). The Helicase ATP-binding domain occupies 69–239 (IKQIIKGRDV…NKFMTDPIRI (171 aa)). Lys-124 carries the N6-acetyllysine modification. Residue Lys-152 forms a Glycyl lysine isopeptide (Lys-Gly) (interchain with G-Cter in SUMO2) linkage. Residue Thr-163 is modified to Phosphothreonine. The DEAD box signature appears at 187-190 (DEAD). N6-acetyllysine is present on residues Lys-198 and Lys-296. The Helicase C-terminal domain occupies 250–411 (GIKQFFVAVE…EMPMNVADLI (162 aa)). Lys-314 participates in a covalent cross-link: Glycyl lysine isopeptide (Lys-Gly) (interchain with G-Cter in SUMO2). Lys-321 is subject to N6-acetyllysine. ATP is bound by residues Asp-342 and 367–371 (RSGRY). Glycyl lysine isopeptide (Lys-Gly) (interchain with G-Cter in SUMO2) cross-links involve residues Lys-374 and Lys-382.

Belongs to the DEAD box helicase family. eIF4A subfamily. In terms of assembly, identified in the spliceosome C complex. Core component of the mRNA splicing-dependent exon junction complex (EJC); the core complex contains CASC3, EIF4A3, MAGOH or MAGOHB, and RBM8A. Interacts with CASC3, MAGOH, NXF1, RBM8A and ALYREF/THOC4. Component of the ALYREF/THOC4-EJC-RNA complex; in the complex interacts with MAGOH, RBM8A and THOC4 (via the WXHD motif); these interactions are likely specific to RNA-bound EJC. May interact with NOM1. Interacts with POLDIP3. Interacts with CWC22 and PRPF19 in an RNA-independent manner. Direct interaction with CWC22 is mediated by the helicase C-terminal domain. Full interaction with CWC22 occurs only when EIF4A3 is not part of the EJC and prevents EIF4A3 binding to RNA. Identified in a complex composed of the EJC core, UPF3B and UPF2. The EJC core can also interact with UPF3A (in vitro). Interacts with NCBP3. Interacts with NRDE2. Interacts with DHX34; the interaction is RNA-independent.

The protein resides in the nucleus. It is found in the nucleus speckle. Its subcellular location is the cytoplasm. The enzyme catalyses ATP + H2O = ADP + phosphate + H(+). The ATPase activity is increased some 4-fold in the presence of RNA. In terms of biological role, ATP-dependent RNA helicase. Involved in pre-mRNA splicing as component of the spliceosome. Core component of the splicing-dependent multiprotein exon junction complex (EJC) deposited at splice junctions on mRNAs. The EJC is a dynamic structure consisting of core proteins and several peripheral nuclear and cytoplasmic associated factors that join the complex only transiently either during EJC assembly or during subsequent mRNA metabolism. The EJC marks the position of the exon-exon junction in the mature mRNA for the gene expression machinery and the core components remain bound to spliced mRNAs throughout all stages of mRNA metabolism thereby influencing downstream processes including nuclear mRNA export, subcellular mRNA localization, translation efficiency and nonsense-mediated mRNA decay (NMD). Its RNA-dependent ATPase and RNA-helicase activities are induced by CASC3, but abolished in presence of the MAGOH-RBM8A heterodimer, thereby trapping the ATP-bound EJC core onto spliced mRNA in a stable conformation. The inhibition of ATPase activity by the MAGOH-RBM8A heterodimer increases the RNA-binding affinity of the EJC. Involved in translational enhancement of spliced mRNAs after formation of the 80S ribosome complex. Binds spliced mRNA in sequence-independent manner, 20-24 nucleotides upstream of mRNA exon-exon junctions. Shows higher affinity for single-stranded RNA in an ATP-bound core EJC complex than after the ATP is hydrolyzed. Involved in the splicing modulation of BCL2L1/Bcl-X (and probably other apoptotic genes); specifically inhibits formation of proapoptotic isoforms; the function is different from the established EJC assembly. Involved in craniofacial development. This chain is Eukaryotic initiation factor 4A-III (Eif4a3), found in Mus musculus (Mouse).